The chain runs to 341 residues: Thymidine kinase (341 aa).

19-26 (GAYGIGKT) provides a ligand contact to ATP. Glu48 (proton acceptor) is an active-site residue. The substrate site is built by Tyr66 and Gln90. Residue Arg183 coordinates ATP. Position 189 (Arg189) interacts with substrate.

Belongs to the herpesviridae thymidine kinase family. In terms of assembly, homodimer.

The catalysed reaction is thymidine + ATP = dTMP + ADP + H(+). In terms of biological role, catalyzes the transfer of the gamma-phospho group of ATP to thymidine to generate dTMP in the salvage pathway of pyrimidine synthesis. The dTMP serves as a substrate for DNA polymerase during viral DNA replication. Allows the virus to be reactivated and to grow in non-proliferative cells lacking a high concentration of phosphorylated nucleic acid precursors. In Varicella-zoster virus (strain Oka vaccine) (HHV-3), this protein is Thymidine kinase.